The chain runs to 423 residues: Protein FAM43A (423 aa).

Residues 263–283 (EQELQEEEEEEQPEGCPEEEE) are compositionally biased toward acidic residues. Disordered regions lie at residues 263 to 298 (EQEL…EAEA), 321 to 344 (RGEA…LLLG), and 382 to 423 (LSGD…PHSG). Over residues 323–335 (EALGGGGGSLGPG) the composition is skewed to gly residues. Residues 383 to 393 (SGDSTGSESSI) show a composition bias toward low complexity. Over residues 401–411 (TSATAGDSSRQ) the composition is skewed to polar residues.

Belongs to the FAM43 family.

The protein is Protein FAM43A (FAM43A) of Homo sapiens (Human).